Reading from the N-terminus, the 159-residue chain is Cyanate hydratase (159 aa).

Residues arginine 103, glutamate 106, and serine 129 contribute to the active site.

The protein belongs to the cyanase family.

The catalysed reaction is cyanate + hydrogencarbonate + 3 H(+) = NH4(+) + 2 CO2. Functionally, catalyzes the reaction of cyanate with bicarbonate to produce ammonia and carbon dioxide. The protein is Cyanate hydratase of Blastomyces gilchristii (strain SLH14081) (Blastomyces dermatitidis).